Reading from the N-terminus, the 470-residue chain is uncharacterized protein (470 aa).

Residues 439-470 (SIKSSKSKKQLKSSKSKKPIKHTKTKNIYVET) form a disordered region. Basic residues predominate over residues 443–463 (SKSKKQLKSSKSKKPIKHTKT).

This is an uncharacterized protein from Acanthamoeba polyphaga mimivirus (APMV).